The chain runs to 357 residues: Guanine nucleotide-binding protein alpha-1 subunit (357 aa).

Gly2 carries N-myristoyl glycine lipidation. Residue Cys4 is the site of S-palmitoyl cysteine attachment. The 326-residue stretch at 32–357 folds into the G-alpha domain; the sequence is NVIKLLLLGA…SSKLKGCGLF (326 aa). Residues 35 to 48 form a G1 motif region; the sequence is KLLLLGAGESGKST. 14 residues coordinate GTP: Glu43, Ser44, Gly45, Lys46, Ser47, Thr48, Asp151, Leu176, Thr182, Gly204, Asn270, Lys271, Asp273, and Ala329. Ser47 contacts Mg(2+). The G2 motif stretch occupies residues 174–182; sequence DILHTRVPT. Residue Thr182 participates in Mg(2+) binding. The segment at 197 to 206 is G3 motif; sequence FRVFDVGGQR. A G4 motif region spans residues 266-273; it reads ILFLNKVD. A G5 motif region spans residues 327–332; sequence TCATDT.

The protein belongs to the G-alpha family. G(q) subfamily. G proteins are composed of 3 units; alpha, beta and gamma. The alpha chain contains the guanine nucleotide binding site. Mg(2+) serves as cofactor.

Guanine nucleotide-binding proteins (G proteins) are involved as modulators or transducers in various transmembrane signaling systems. The polypeptide is Guanine nucleotide-binding protein alpha-1 subunit (gpa-1) (Caenorhabditis briggsae).